Consider the following 297-residue polypeptide: 3-mercaptopyruvate sulfurtransferase (297 aa).

The residue at position 2 (Ala-2) is an N-acetylalanine. In terms of domain architecture, Rhodanese 1 spans Ala-25 to Ser-144. Ser-35 carries the phosphoserine modification. At Lys-40 the chain carries N6-acetyllysine; alternate. Lys-40 carries the post-translational modification N6-succinyllysine; alternate. A hinge region spans residues Gly-145 to Pro-160. N6-succinyllysine is present on residues Lys-146 and Lys-164. A Rhodanese 2 domain is found at Asp-174–Val-288. Residue Arg-188 coordinates substrate. Cys-248 serves as the catalytic Cysteine persulfide intermediate.

Monomer (active form). Homodimer; disulfide-linked (inactive form). Post-translationally, the N-terminus is blocked. Expressed in liver, heart, kidney and brain. Localizes to tubular epithelium in the kidney, pericentral hepatocytes in the liver, cardiac cells in the heart and neuroglial cells in the brain. Also expressed in vascular endothelium of the thoracic aorta. Weak expression in lung and thymus.

It localises to the cytoplasm. The protein resides in the mitochondrion. Its subcellular location is the synapse. The protein localises to the synaptosome. The catalysed reaction is 2-oxo-3-sulfanylpropanoate + [thioredoxin]-dithiol = [thioredoxin]-disulfide + hydrogen sulfide + pyruvate + H(+). Its activity is regulated as follows. By oxidative stress, and thioredoxin. Under oxidative stress conditions, the catalytic cysteine site is converted to a sulfenate which inhibits the MPST enzyme activity. Reduced thioredoxin cleaves an intersubunit disulfide bond to turn on the redox switch and reactivate the enzyme. Inhibited by different oxidants, hydrogen peroxide and tetrathionate. Functionally, transfer of a sulfur ion to cyanide or to other thiol compounds. Also has weak rhodanese activity. Detoxifies cyanide and is required for thiosulfate biosynthesis. Acts as an antioxidant. In combination with cysteine aminotransferase (CAT), contributes to the catabolism of cysteine and is an important producer of hydrogen sulfide in the brain, retina and vascular endothelial cells. Hydrogen sulfide H(2)S is an important synaptic modulator, signaling molecule, smooth muscle contractor and neuroprotectant. Its production by the 3MST/CAT pathway is regulated by calcium ions. The sequence is that of 3-mercaptopyruvate sulfurtransferase (Mpst) from Rattus norvegicus (Rat).